The primary structure comprises 198 residues: tRNA (pseudouridine(54)-N(1))-methyltransferase (198 aa).

Position 128 (L128) interacts with S-adenosyl-L-methionine.

The protein belongs to the methyltransferase superfamily. TrmY family. Homodimer.

Its subcellular location is the cytoplasm. The enzyme catalyses pseudouridine(54) in tRNA + S-adenosyl-L-methionine = N(1)-methylpseudouridine(54) in tRNA + S-adenosyl-L-homocysteine + H(+). Its function is as follows. Specifically catalyzes the N1-methylation of pseudouridine at position 54 (Psi54) in tRNAs. In Haloarcula marismortui (strain ATCC 43049 / DSM 3752 / JCM 8966 / VKM B-1809) (Halobacterium marismortui), this protein is tRNA (pseudouridine(54)-N(1))-methyltransferase.